The chain runs to 119 residues: Gas vesicle protein O1 (119 aa).

Positions 1 to 12 (MADPANDRSERE) are enriched in basic and acidic residues. The tract at residues 1 to 48 (MADPANDRSEREEGGEDDETPPASDGNPSPSANSFTLSNAQTRAREAA) is disordered. The segment covering 26–42 (GNPSPSANSFTLSNAQT) has biased composition (polar residues).

Belongs to the gas vesicle GvpO family. As to quaternary structure, forms homodimers, forms a GvpN1-GvpO1 heterodimer, interacts with GvpC1 (via the latter's C-terminus), GvpF1, GvpI1 and GvpL1, might interact with GvpA1.

It is found in the gas vesicle. The protein localises to the cytoplasm. Its function is as follows. A minor component of the gas vesicle, also found in soluble extracts. May play a role in transcription and/or RNA stability and in GV assembly. Gas vesicles are hollow, gas filled proteinaceous nanostructures found in several microbial planktonic microorganisms. They allow positioning of halobacteria at the optimal depth for growth in the poorly aerated, shallow brine pools of their habitat. Functionally, expression of a 9.5 kb p-vac DNA fragment containing 2 divergently transcribed regions (gvpD-gvpE-gvpF-gvpG-gvpH-gvpI-gvpJ-gvpK-gvpL-gvpM and gvpA-gvpC-gvpN-gvpO) allows H.volcanii to produce gas vesicles. A minimal gas vesicle can be made in H.volcanii by gvpA1-gvpO1 gvpF1-gvpG1-gvpJ1-gvpK1-gvpL1-gvpM1; lack of enough GvpJ1 prevents formation. The same region restores gas vesicle production in H.halobium without the p-vac locus, but it still has the c-vac locus. The sequence is that of Gas vesicle protein O1 from Halobacterium salinarum (strain ATCC 700922 / JCM 11081 / NRC-1) (Halobacterium halobium).